The sequence spans 542 residues: Plasminogen-binding protein PgbB (542 aa).

Residues 399–542 (KSASKKSQKG…RRKALEMNKK (144 aa)) are disordered. Composition is skewed to basic and acidic residues over residues 418 to 435 (QERH…ENKV) and 447 to 456 (VKTRRPEPIR). The span at 457–467 (DQNNATQQGET) shows a compositional bias: polar residues. The span at 481–542 (NAAKKEVPKP…RRKALEMNKK (62 aa)) shows a compositional bias: basic and acidic residues.

It localises to the cell surface. Binds plasminogen, specifically, and in a concentration and lysine-dependent manner. Plasminogen is the precursor of plasmin, a serine protease that cleaves fibrin, fibronectin, laminin and vitronectin. Acquisition of plasminogen/plasmin could enable H.pylori to degrade host components. This is Plasminogen-binding protein PgbB (pgbB) from Helicobacter pylori (strain ATCC 700392 / 26695) (Campylobacter pylori).